The primary structure comprises 29 residues: Lambda-theraphotoxin-Ec2a (29 aa).

Cystine bridges form between Cys-2–Cys-16, Cys-9–Cys-21, and Cys-15–Cys-25.

It belongs to the neurotoxin 30 (phrixotoxin) family. As to expression, expressed by the venom gland.

The protein resides in the secreted. Functionally, insect-selective neurotoxin that potently blocks insect calcium-activated potassium (BKCa) channels (Slo-type) in cockroach dorsal unpaired median (DUM) neurons (IC(50)=3.7 nM). This occurs in the absence of any shifts in the voltage dependence of activation. At high concentrations (330 nM), it partially inhibits cockroach delayed-rectifier potassium channels (Kv) currents. May interact with the turret and/or loop region of the external entrance to the channel and does not project deeply into the pore of the channel. In vivo, does not show toxicity in mice after intracerebroventricular injection of up to 25 pmol/g (1.8 ug/20 g mouse). The protein is Lambda-theraphotoxin-Ec2a of Eucratoscelus constrictus (African red-rump baboon spider).